A 906-amino-acid polypeptide reads, in one-letter code: Protein translocase subunit SecA (906 aa).

ATP contacts are provided by residues glutamine 86, 104–108 (GEGKT), and aspartate 499. Zn(2+)-binding residues include cysteine 890, cysteine 892, cysteine 901, and histidine 902.

The protein belongs to the SecA family. In terms of assembly, monomer and homodimer. Part of the essential Sec protein translocation apparatus which comprises SecA, SecYEG and auxiliary proteins SecDF-YajC and YidC. Zn(2+) is required as a cofactor.

The protein localises to the cell inner membrane. Its subcellular location is the cytoplasm. It carries out the reaction ATP + H2O + cellular proteinSide 1 = ADP + phosphate + cellular proteinSide 2.. Functionally, part of the Sec protein translocase complex. Interacts with the SecYEG preprotein conducting channel. Has a central role in coupling the hydrolysis of ATP to the transfer of proteins into and across the cell membrane, serving both as a receptor for the preprotein-SecB complex and as an ATP-driven molecular motor driving the stepwise translocation of polypeptide chains across the membrane. The sequence is that of Protein translocase subunit SecA from Rickettsia prowazekii (strain Madrid E).